Here is a 556-residue protein sequence, read N- to C-terminus: Formate--tetrahydrofolate ligase (556 aa).

65 to 72 (TPAGEGKT) is an ATP binding site.

It belongs to the formate--tetrahydrofolate ligase family.

The catalysed reaction is (6S)-5,6,7,8-tetrahydrofolate + formate + ATP = (6R)-10-formyltetrahydrofolate + ADP + phosphate. It functions in the pathway one-carbon metabolism; tetrahydrofolate interconversion. In Ruminiclostridium cellulolyticum (strain ATCC 35319 / DSM 5812 / JCM 6584 / H10) (Clostridium cellulolyticum), this protein is Formate--tetrahydrofolate ligase.